Here is a 95-residue protein sequence, read N- to C-terminus: Pyrimidine/purine nucleoside phosphorylase (95 aa).

Belongs to the nucleoside phosphorylase PpnP family.

The catalysed reaction is a purine D-ribonucleoside + phosphate = a purine nucleobase + alpha-D-ribose 1-phosphate. The enzyme catalyses adenosine + phosphate = alpha-D-ribose 1-phosphate + adenine. It carries out the reaction cytidine + phosphate = cytosine + alpha-D-ribose 1-phosphate. It catalyses the reaction guanosine + phosphate = alpha-D-ribose 1-phosphate + guanine. The catalysed reaction is inosine + phosphate = alpha-D-ribose 1-phosphate + hypoxanthine. The enzyme catalyses thymidine + phosphate = 2-deoxy-alpha-D-ribose 1-phosphate + thymine. It carries out the reaction uridine + phosphate = alpha-D-ribose 1-phosphate + uracil. It catalyses the reaction xanthosine + phosphate = alpha-D-ribose 1-phosphate + xanthine. In terms of biological role, catalyzes the phosphorolysis of diverse nucleosides, yielding D-ribose 1-phosphate and the respective free bases. Can use uridine, adenosine, guanosine, cytidine, thymidine, inosine and xanthosine as substrates. Also catalyzes the reverse reactions. This Yersinia pestis bv. Antiqua (strain Antiqua) protein is Pyrimidine/purine nucleoside phosphorylase.